The chain runs to 576 residues: Threonine dehydratase, mitochondrial (576 aa).

The residue at position 109 (K109) is an N6-(pyridoxal phosphate)lysine. ACT-like domains are found at residues V393–D473 and R495–D566.

It belongs to the serine/threonine dehydratase family. As to quaternary structure, homotetramer. Pyridoxal 5'-phosphate is required as a cofactor.

Its subcellular location is the mitochondrion. It catalyses the reaction L-threonine = 2-oxobutanoate + NH4(+). It functions in the pathway amino-acid biosynthesis; L-isoleucine biosynthesis; 2-oxobutanoate from L-threonine: step 1/1. Isoleucine allosterically inhibits while valine allosterically activates this enzyme. The chain is Threonine dehydratase, mitochondrial (ILV1) from Saccharomyces cerevisiae (strain ATCC 204508 / S288c) (Baker's yeast).